We begin with the raw amino-acid sequence, 173 residues long: Protein FAM180A (173 aa).

The signal sequence occupies residues 1–17 (MHWKMLLLLLLYYNAEA).

Belongs to the FAM180 family.

The protein localises to the secreted. This chain is Protein FAM180A (FAM180A), found in Homo sapiens (Human).